We begin with the raw amino-acid sequence, 104 residues long: L-rhamnose mutarotase (104 aa).

Tyr18 is a substrate binding site. The Proton donor role is filled by His22. Substrate is bound by residues Tyr41 and 76 to 77 (WW).

This sequence belongs to the rhamnose mutarotase family. As to quaternary structure, homodimer.

It is found in the cytoplasm. The enzyme catalyses alpha-L-rhamnose = beta-L-rhamnose. The protein operates within carbohydrate metabolism; L-rhamnose metabolism. In terms of biological role, involved in the anomeric conversion of L-rhamnose. The protein is L-rhamnose mutarotase of Pectobacterium carotovorum subsp. carotovorum (strain PC1).